We begin with the raw amino-acid sequence, 589 residues long: 3-(3-hydroxy-phenyl)propionate/3-hydroxycinnamic acid hydroxylase (589 aa).

Residues 15-44 (DVLI…VAEK) and 283-293 (FRVDRILLAGD) each bind FAD.

Belongs to the PheA/TfdB FAD monooxygenase family. FAD is required as a cofactor.

The enzyme catalyses 3-(3-hydroxyphenyl)propanoate + NADH + O2 + H(+) = 3-(2,3-dihydroxyphenyl)propanoate + NAD(+) + H2O. It catalyses the reaction (2E)-3-(3-hydroxyphenyl)prop-2-enoate + NADH + O2 + H(+) = (2E)-3-(2,3-dihydroxyphenyl)prop-2-enoate + NAD(+) + H2O. It participates in aromatic compound metabolism; 3-phenylpropanoate degradation. Catalyzes the insertion of one atom of molecular oxygen into position 2 of the phenyl ring of 3-(3-hydroxyphenyl)propionate (3-HPP) and hydroxycinnamic acid (3HCI). The chain is 3-(3-hydroxy-phenyl)propionate/3-hydroxycinnamic acid hydroxylase from Comamonas testosteroni (Pseudomonas testosteroni).